The primary structure comprises 276 residues: Rhomboid protease GlpG (276 aa).

6 helical membrane-spanning segments follow: residues 94–114, 142–162, 169–189, 192–212, 229–249, and 250–270; these read GPVT…MQIL, ALMH…WYLG, LGSG…GYVQ, FSGP…GYVW, LIIF…GMSM, and ANGA…VDSL. S201 (nucleophile) is an active-site residue. H254 is an active-site residue.

The protein belongs to the peptidase S54 family.

It is found in the cell inner membrane. It carries out the reaction Cleaves type-1 transmembrane domains using a catalytic dyad composed of serine and histidine that are contributed by different transmembrane domains.. Functionally, rhomboid-type serine protease that catalyzes intramembrane proteolysis. In Escherichia coli (strain 55989 / EAEC), this protein is Rhomboid protease GlpG.